Here is a 498-residue protein sequence, read N- to C-terminus: MKKYILAIDQGTTSSRAILFNHAGQIHGMTQQEYPQIFPAPGWVEHDANAIWHSQLAVAQQVLKEQHLSAADIAAIGITNQRETTVLWDRQTGEPIAHAIVWQDRRTAALCDQLRADGKAPLFQQKTGLVLDSYFSGTKLKWLLDHTPGARVRAERGELAFGTIDSWLIFKLSGNHVTDTSNASRTLLFNIHTKQWDDELLALLDIPHSLLPAIVPSSGIVGQTYTSLFGQSIPIAGIAGDQQAATFGQACHRPGMAKNTYGTGCFMLLNTGTQAIASHNNLLTTIGWTLGNDVDARTDYMLEGSVFMAGAIIQWLRDGLGIIQHSSDVEALATSVPDNGGVVFIPAFSGLGAPYWDPYARGTIVGMTRGSNKAHIARAALESIAYQTVDVLEAMQKDAQILLQELRVDGGAARNDLLMQFQADMLNVPVIRPVVTETTALGAAYLAGLAVAFWESKEEIATQWQMERRFEPRMTDDEHAQRLYTWHRAVQRAQAWNI.

ADP is bound at residue Thr-12. Residues Thr-12, Thr-13, and Ser-14 each contribute to the ATP site. Thr-12 serves as a coordination point for sn-glycerol 3-phosphate. Arg-16 serves as a coordination point for ADP. Residues Arg-82, Glu-83, Tyr-134, and Asp-241 each contribute to the sn-glycerol 3-phosphate site. Positions 82, 83, 134, 241, and 242 each coordinate glycerol. 2 residues coordinate ADP: Thr-263 and Gly-310. Thr-263, Gly-310, Gln-314, and Gly-411 together coordinate ATP. ADP-binding residues include Gly-411 and Asn-415.

It belongs to the FGGY kinase family.

It carries out the reaction glycerol + ATP = sn-glycerol 3-phosphate + ADP + H(+). It participates in polyol metabolism; glycerol degradation via glycerol kinase pathway; sn-glycerol 3-phosphate from glycerol: step 1/1. With respect to regulation, inhibited by fructose 1,6-bisphosphate (FBP). Functionally, key enzyme in the regulation of glycerol uptake and metabolism. Catalyzes the phosphorylation of glycerol to yield sn-glycerol 3-phosphate. The polypeptide is Glycerol kinase (Herminiimonas arsenicoxydans).